Consider the following 578-residue polypeptide: Thiol:disulfide interchange protein DsbD (578 aa).

Residues 1 to 24 (MAQRFITLILLLCSILLAPHSAQA) form the signal peptide. 2 cysteine pairs are disulfide-bonded: Cys-134–Cys-140 and Cys-195–Cys-317. A run of 9 helical transmembrane segments spans residues 183–203 (ALLI…YPLI), 219–239 (ILLL…LLGL), 256–276 (YVLI…FGLY), 297–317 (GGSL…CSPC), 318–338 (TTAP…MLAG), 339–359 (GGTL…VTLF), 370–390 (WMQY…VFLL), 397–417 (VWGL…AFIL), and 421–441 (AHSG…LIAA). A Thioredoxin domain is found at 438 to 578 (LIAARPLQDW…FLQHLQNLPR (141 aa)). Cys-493 and Cys-496 are disulfide-bonded.

It belongs to the thioredoxin family. DsbD subfamily.

It localises to the cell inner membrane. The enzyme catalyses [protein]-dithiol + NAD(+) = [protein]-disulfide + NADH + H(+). It catalyses the reaction [protein]-dithiol + NADP(+) = [protein]-disulfide + NADPH + H(+). Its function is as follows. Required to facilitate the formation of correct disulfide bonds in some periplasmic proteins and for the assembly of the periplasmic c-type cytochromes. Acts by transferring electrons from cytoplasmic thioredoxin to the periplasm. This transfer involves a cascade of disulfide bond formation and reduction steps. The protein is Thiol:disulfide interchange protein DsbD of Yersinia enterocolitica serotype O:8 / biotype 1B (strain NCTC 13174 / 8081).